The primary structure comprises 375 residues: Glycogen synthase kinase-3 homolog YGK3 (375 aa).

The region spanning 41–329 is the Protein kinase domain; sequence VREGKRIGHG…ARQLMAHEFF (289 aa). ATP contacts are provided by residues 47–55 and K74; that span reads IGHGSFGTV. D173 (proton acceptor) is an active-site residue. S211 carries the post-translational modification Phosphoserine.

This sequence belongs to the protein kinase superfamily. Ser/Thr protein kinase family.

It carries out the reaction L-seryl-[protein] + ATP = O-phospho-L-seryl-[protein] + ADP + H(+). The enzyme catalyses L-threonyl-[protein] + ATP = O-phospho-L-threonyl-[protein] + ADP + H(+). Functionally, required for heat stress-instigated phosphorylation of BCY1 which is involved in cell wall integrity signaling. Regulates activity of MSN2, a transcription factor that binds to the stress-response element (STRE). Probably promotes formation of a complex between MSN2 and DNA. Regulates the stability of ROG1. The protein is Glycogen synthase kinase-3 homolog YGK3 (YGK3) of Saccharomyces cerevisiae (strain ATCC 204508 / S288c) (Baker's yeast).